Here is a 540-residue protein sequence, read N- to C-terminus: MNIKKFRILFFFNKKYSYLSTIKLKEFHLNHWEKYNNKLKIMENIPNGKKRQNTYLDGGSDFDVNKKTRLVLLNERGVSGRIPTTANIGEINNKDNVLKTFDVCNSFNSAFENDKSEELETHHDKIVGLKIPTIHDTIKTEKKVIIKKECEIKDVNPNDKIGGSLENDKIEGGLENEKIGGGLENDKKNELPEQVRKNVNVIVTWNMNSITVRYKNKEKWKRFMKFVNEINADVLCFQEVRLPALNISKNESKNVNNKVYGGKKNEGEERNRGSVKNTDQKSLIDYKIVEEILKNDFKEYNGYFSLANIKYSGQLVLVKKSIKVKSVRYNLLFETDPNIHNDEGRIILLEFSNFYLLSTYSPNNGFDQTKFKRRSLFDNQMKEFVLFMKNENKNLIWTGDLNIAPEDVDLSHPIEFRKMKKGNVPKEYIGQPGCTDAERANFKTILKNGDLIDSYRYFENYKIKNDPTYKRKTNINDNIYTWRCPFLIGKSCNRAMRIDHFIVSKNLLNQIENIEIHGYSVFHTNFYGSDHCPVILNMKK.

Mg(2+)-binding residues include N206 and E239. The segment at 256 to 276 (NNKVYGGKKNEGEERNRGSVK) is disordered. The segment covering 263-276 (KKNEGEERNRGSVK) has biased composition (basic and acidic residues). Residues D400, N402, D530, and H531 each coordinate Mg(2+). Catalysis depends on H531, which acts as the Proton acceptor.

It belongs to the DNA repair enzymes AP/ExoA family. The cofactor is Mg(2+). It depends on Mn(2+) as a cofactor. May be proteolytically cleaved.

Its subcellular location is the mitochondrion. The enzyme catalyses Exonucleolytic cleavage in the 3'- to 5'-direction to yield nucleoside 5'-phosphates.. Its function is as follows. Multifunctional protein that plays a central role in mitochondrial DNA base excision repair pathway induced by oxidative stress. Has apurinic/apyrimidinic (AP) endonuclease activity towards double-stranded DNA (dsDNA). Has nucleotide incision repair (NIR) activity; acts on dsDNA with oxidized bases thymine glycol and 5,6-dihydro-2'-deoxyuridine. Has 3'-5' exonuclease; can use dsDNA templates with 3'-OH termini including blunt-end, gapped and mismatched 3'-recessed. Has 3'-phosphatase activity; cleaves 3'-phosphate from blunt, recessed and gapped dsDNA templates, followed by 3'-5' exonuclease activity. Has RNase H-like activity; cleaves RNA on 3'-recessed RNA-DNA duplex. Plays a role in merosome infection of host erythrocytes. The polypeptide is DNA-(apurinic or apyrimidinic site) endonuclease (Plasmodium berghei (strain Anka)).